The following is a 508-amino-acid chain: Strychnine-11-hydroxylase (508 aa).

Residues Met-5–Ile-25 traverse the membrane as a helical segment. Cys-445 is a binding site for heme.

The protein belongs to the cytochrome P450 family. The cofactor is heme.

The protein localises to the membrane. It carries out the reaction beta-colubrine + reduced [NADPH--hemoprotein reductase] + O2 = 11-demethylbrucine + oxidized [NADPH--hemoprotein reductase] + H2O + H(+). It participates in alkaloid biosynthesis. Monooxygenase involved in the biosynthesis of curare monoterpene indole alkaloids (MIAs), natural products such as strychnine, a neurotoxic compound used as a pesticide to control rodents, and its pharmacologically active derivatives, including brucine, used to regulate blood pressure. Curare alkaloids act as animal glycine receptor antagonists. Catalyzes the conversion of beta-colubrine to 11-deMe brucine. This chain is Strychnine-11-hydroxylase, found in Strychnos nux-vomica (Poison nut).